The primary structure comprises 526 residues: Putative UDP-glucuronosyltransferase ugt-48 (526 aa).

The first 17 residues, 1 to 17 (MLLRILTFLAVCQVTTS), serve as a signal peptide directing secretion. N-linked (GlcNAc...) asparagine glycosylation is found at N58 and N305. The helical transmembrane segment at 489-509 (FYNLDIIITAASIPVLIFIVL) threads the bilayer. N513 is a glycosylation site (N-linked (GlcNAc...) asparagine).

This sequence belongs to the UDP-glycosyltransferase family. Interacts with cmd-1 in the presence of Ca(2+).

The protein localises to the membrane. It catalyses the reaction glucuronate acceptor + UDP-alpha-D-glucuronate = acceptor beta-D-glucuronoside + UDP + H(+). The polypeptide is Putative UDP-glucuronosyltransferase ugt-48 (ugt-48) (Caenorhabditis elegans).